The following is a 351-amino-acid chain: Holliday junction branch migration complex subunit RuvB (351 aa).

Residues 1 to 182 (MNDRLITPDA…FGIVQRLEYY (182 aa)) are large ATPase domain (RuvB-L). ATP-binding positions include Ile21, Arg22, Gly63, Lys66, Thr67, Thr68, 129–131 (EDF), Arg172, Tyr182, and Arg219. Residue Thr67 participates in Mg(2+) binding. The tract at residues 183–253 (NVADLSGIVK…VAHAAMELLN (71 aa)) is small ATPAse domain (RuvB-S). Residues 256-351 (RNGFDEQDRR…QDAPPVGRER (96 aa)) are head domain (RuvB-H). DNA is bound by residues Arg292, Arg311, and Arg316. A disordered region spans residues 328-351 (LNPPRQPDTSPDLFQDAPPVGRER).

Belongs to the RuvB family. Homohexamer. Forms an RuvA(8)-RuvB(12)-Holliday junction (HJ) complex. HJ DNA is sandwiched between 2 RuvA tetramers; dsDNA enters through RuvA and exits via RuvB. An RuvB hexamer assembles on each DNA strand where it exits the tetramer. Each RuvB hexamer is contacted by two RuvA subunits (via domain III) on 2 adjacent RuvB subunits; this complex drives branch migration. In the full resolvosome a probable DNA-RuvA(4)-RuvB(12)-RuvC(2) complex forms which resolves the HJ.

It localises to the cytoplasm. It catalyses the reaction ATP + H2O = ADP + phosphate + H(+). Its function is as follows. The RuvA-RuvB-RuvC complex processes Holliday junction (HJ) DNA during genetic recombination and DNA repair, while the RuvA-RuvB complex plays an important role in the rescue of blocked DNA replication forks via replication fork reversal (RFR). RuvA specifically binds to HJ cruciform DNA, conferring on it an open structure. The RuvB hexamer acts as an ATP-dependent pump, pulling dsDNA into and through the RuvAB complex. RuvB forms 2 homohexamers on either side of HJ DNA bound by 1 or 2 RuvA tetramers; 4 subunits per hexamer contact DNA at a time. Coordinated motions by a converter formed by DNA-disengaged RuvB subunits stimulates ATP hydrolysis and nucleotide exchange. Immobilization of the converter enables RuvB to convert the ATP-contained energy into a lever motion, pulling 2 nucleotides of DNA out of the RuvA tetramer per ATP hydrolyzed, thus driving DNA branch migration. The RuvB motors rotate together with the DNA substrate, which together with the progressing nucleotide cycle form the mechanistic basis for DNA recombination by continuous HJ branch migration. Branch migration allows RuvC to scan DNA until it finds its consensus sequence, where it cleaves and resolves cruciform DNA. The sequence is that of Holliday junction branch migration complex subunit RuvB from Alkalilimnicola ehrlichii (strain ATCC BAA-1101 / DSM 17681 / MLHE-1).